A 107-amino-acid polypeptide reads, in one-letter code: MKWIVIDTVIQPTCGISFSAIWGDMKMIIWYQPTIFLTPGSIFTPVKSGIIFKDKEYPITIYNITPFNKDLWSLLKSSQECPPGESEITNKCLHNSCIIKICPYGLK.

The protein belongs to the IraM/RssC family.

The protein localises to the cytoplasm. Inhibits RpoS proteolysis by regulating RssB activity, thereby increasing the stability of the sigma stress factor RpoS during magnesium starvation. In Escherichia coli O17:K52:H18 (strain UMN026 / ExPEC), this protein is Anti-adapter protein IraM.